Consider the following 187-residue polypeptide: Probable carboxylesterase Culp7 (187 aa).

Cys15 and Cys69 are oxidised to a cystine. Catalysis depends on Ser80, which acts as the Nucleophile. An intrachain disulfide couples Cys151 to Cys158. Asp155 is a catalytic residue. His167 acts as the Proton donor/acceptor in catalysis.

The protein belongs to the cutinase family.

Its subcellular location is the cytoplasm. It is found in the cell membrane. It localises to the secreted. The protein localises to the cell wall. Functionally, may have a role in cell wall processes. Does not exhibit cutinase activity. This Mycobacterium tuberculosis (strain ATCC 25618 / H37Rv) protein is Probable carboxylesterase Culp7.